Here is a 307-residue protein sequence, read N- to C-terminus: Ribosomal RNA small subunit methyltransferase H (307 aa).

Residues 32–34 (AGH), Asp51, Ile82, Asp99, and Gln106 contribute to the S-adenosyl-L-methionine site.

It belongs to the methyltransferase superfamily. RsmH family.

The protein resides in the cytoplasm. It catalyses the reaction cytidine(1402) in 16S rRNA + S-adenosyl-L-methionine = N(4)-methylcytidine(1402) in 16S rRNA + S-adenosyl-L-homocysteine + H(+). In terms of biological role, specifically methylates the N4 position of cytidine in position 1402 (C1402) of 16S rRNA. In Campylobacter concisus (strain 13826), this protein is Ribosomal RNA small subunit methyltransferase H.